The following is a 1009-amino-acid chain: Delphilin (1009 aa).

Disordered stretches follow at residues 28–82 (CRSK…SNTM), 170–193 (EGPV…RSRS), 322–369 (ASPD…SRDT), 414–635 (ELSS…SDNN), and 990–1009 (SETQ…PLAW). Over residues 44 to 53 (RSQDHHERPQ) the composition is skewed to basic and acidic residues. The PDZ domain maps to 95–172 (TIRVYRGKKS…MPSLVVEEGP (78 aa)). Residues 322–332 (ASPDSVDSNPY) are compositionally biased toward polar residues. Low complexity-rich tracts occupy residues 334-352 (SLDS…SPLP) and 427-439 (DDST…SGSD). Pro residues-rich tracts occupy residues 441–455 (IPPP…PPPL), 462–477 (SPLP…PPPA), and 484–493 (IAPPPPPPRP). The span at 521 to 535 (SSPQPSSQPILQLHQ) shows a compositional bias: low complexity. Over residues 557–602 (AQHTRLQHPSQSIYQSQQTTVPRTSPSLTKQKSLHSQPSQQSFEGT) the composition is skewed to polar residues. A compositionally biased stretch (pro residues) spans 607–628 (VPPPPPPPLPPPCDPPPLPKPS). The region spanning 629–1009 (PKASDNNHMS…SPRIASPLAW (381 aa)) is the FH2 domain.

It localises to the postsynaptic cell membrane. Postsynaptic scaffolding protein. The sequence is that of Delphilin (grid2ip) from Danio rerio (Zebrafish).